The following is a 30-amino-acid chain: GIPCGESCVWIPCISSALGCSCKNKVCYRN.

Positions 1-30 (GIPCGESCVWIPCISSALGCSCKNKVCYRN) form a cross-link, cyclopeptide (Gly-Asn). 3 cysteine pairs are disulfide-bonded: Cys-4/Cys-20, Cys-8/Cys-22, and Cys-13/Cys-27.

In terms of processing, this is a cyclic peptide. Expressed in fruit, pedicel, stem and root but not in leaf (at protein level).

Probably participates in a plant defense mechanism. This chain is Chassatide C3, found in Chassalia chartacea (Chassalia curviflora).